A 335-amino-acid polypeptide reads, in one-letter code: MSTLRALRAVLCVYAVGIAVALAQLLRRLRGDFRPPVLPPQPGRVAIVTGATAGIGRSTARQLARLGMCVVVAGNDEHRGQEVVSSIRAEMGSDRAHFLPLDLASLASVRGFARDFQALGLPLHLLVNNAGVMLEPRAETEDGFERHLGVNFLGHFLLTLLLLPALRASGAEGRGSRVVTVGSATHYVGTVDMADLHGRHAYSPYAAYAQSKLALALFALQLQRILDARGDPVTSNMADPGVVDTELYRHAGWVLRTAKRFLGWLVFKSPEEGAWTLVYAAAAPELEGVGGRYLRDEAEAEPLGTARDQELQRRLWAEGLRLTGAGGGDSDGVAW.

NAD(+) contacts are provided by Ile55, Tyr208, Lys212, and Thr245. Residue Tyr208 is the Proton acceptor of the active site.

It belongs to the short-chain dehydrogenases/reductases (SDR) family.

The protein localises to the lipid droplet. It is found in the secreted. It carries out the reaction a di-trans,poly-cis-polyprenol + NAD(+) = a di-trans,poly-cis-polyprenal + NADH + H(+). It catalyses the reaction a di-trans,poly-cis-polyprenol + NADP(+) = a di-trans,poly-cis-polyprenal + NADPH + H(+). The enzyme catalyses a di-trans,poly-cis-dolichol + NADP(+) = a di-trans,poly-cis-dolichal + NADPH + H(+). The catalysed reaction is a di-trans,poly-cis-dolichol + NAD(+) = a di-trans,poly-cis-dolichal + NADH + H(+). Its pathway is protein modification; protein glycosylation. In terms of biological role, oxidoreductase that plays a key role in early steps of protein N-linked glycosylation by mediating two non-consecutive steps in dolichol biosynthesis. Acts both as a NAD(+)-dependent dehydrogenase and as a NADPH-dependent reductase during the conversion of polyprenol into dolichol. First catalyzes the NAD(+)-dependent dehydrogenation of polyprenol into polyprenal; polyprenal is then reduced into dolichal by SRD5A3. It then catalyzes the NADPH-dependent reduction of dolichal into dolichol. May also acts as a positive regulator of starvation-induced autophagy. The polypeptide is Polyprenol dehydrogenase (Dhrsx) (Mus musculus (Mouse)).